A 4306-amino-acid polypeptide reads, in one-letter code: Cytoplasmic dynein 2 heavy chain 1 (4306 aa).

A stem region spans residues 1–1650 (MAGSLGDVRK…YVQMVDSELQ (1650 aa)). Residue 145 to 152 (LGIVLRKS) participates in ATP binding. The stretch at 669–696 (KELEGYIQKLQNAAERLATENRRLRKWH) forms a coiled coil. AAA stretches follow at residues 1651 to 1875 (YTYE…VLRG), 1941 to 2161 (SALK…KQND), 2249 to 2505 (LTAD…WVLG), and 2617 to 2862 (HYGR…ESCK). ATP is bound by residues 1689–1696 (GPAGTGKT), 1979–1986 (GPSGAGKS), 2291–2298 (GPEGCGKG), and 2655–2662 (GRSGVGRR). Positions 2880 to 3168 (AISSSKKKEL…AEVSKAQETI (289 aa)) are stalk. 3 coiled-coil regions span residues 2896 to 2981 (LQAG…KEVQ), 3108 to 3199 (LETE…LATL), and 3407 to 3441 (IQHEKPDLEEQKTKLLQQEEDKKIQLARLEESLLE). 2 AAA regions span residues 3243-3472 (LCTE…LIQD) and 3689-3904 (MALF…VIDR).

It belongs to the dynein heavy chain family. As to quaternary structure, the cytoplasmic dynein complex 2 is probably composed by a heavy chain DYNC2H1 homodimer and a number of DYNC2LI1 light intermediate chains. In terms of tissue distribution, detected in brain, lung, spleen and kidney (at protein level). Enriched in the ependymal layer lining the lateral ventricles (at protein level).

It is found in the cytoplasm. The protein localises to the cytoskeleton. Its subcellular location is the cilium axoneme. It localises to the cell membrane. Its function is as follows. May function as a motor for intraflagellar retrograde transport. Functions in cilia biogenesis. According to PubMed:8666668, it may play a role in transport between endoplasmic reticulum and Golgi or organization of the Golgi in cells. This is Cytoplasmic dynein 2 heavy chain 1 (Dync2h1) from Mus musculus (Mouse).